The sequence spans 342 residues: tRNA N6-adenosine threonylcarbamoyltransferase (342 aa).

Fe cation is bound by residues His114 and His118. Substrate contacts are provided by residues 136 to 140, Asp169, Gly182, Asp186, and Asn275; that span reads LVSGG. Residue Asp301 participates in Fe cation binding.

Belongs to the KAE1 / TsaD family. Fe(2+) is required as a cofactor.

It is found in the cytoplasm. It carries out the reaction L-threonylcarbamoyladenylate + adenosine(37) in tRNA = N(6)-L-threonylcarbamoyladenosine(37) in tRNA + AMP + H(+). In terms of biological role, required for the formation of a threonylcarbamoyl group on adenosine at position 37 (t(6)A37) in tRNAs that read codons beginning with adenine. Is involved in the transfer of the threonylcarbamoyl moiety of threonylcarbamoyl-AMP (TC-AMP) to the N6 group of A37, together with TsaE and TsaB. TsaD likely plays a direct catalytic role in this reaction. The polypeptide is tRNA N6-adenosine threonylcarbamoyltransferase (Streptococcus pyogenes serotype M2 (strain MGAS10270)).